Here is a 187-residue protein sequence, read N- to C-terminus: uncharacterized protein (187 aa).

A coiled-coil region spans residues 127–172 (KQPQVTLTQLQEELDEAKTRLALKEKELLEALSEISKLRLQLSNQL).

This is an uncharacterized protein from Tomato torrado virus (isolate Solanum lycopersicum/Spain/PRIToTV0301/-) (ToTV).